The following is a 243-amino-acid chain: Small ribosomal subunit protein uS2 (243 aa).

This sequence belongs to the universal ribosomal protein uS2 family.

This Pseudoalteromonas atlantica (strain T6c / ATCC BAA-1087) protein is Small ribosomal subunit protein uS2.